The following is a 322-amino-acid chain: Phospho-N-acetylmuramoyl-pentapeptide-transferase (322 aa).

Helical transmembrane passes span 9-29, 54-74, 82-102, 122-142, 145-165, 176-196, 200-220, 227-247, 255-275, and 302-322; these read IALV…INFM, TMGG…VAAW, VWIL…DDGI, IIIA…FGLY, FAGV…WLVG, LDGL…YIAF, NFAV…FFIF, IFMG…VSIM, LLIG…VISF, and VDIV…AIWG.

It belongs to the glycosyltransferase 4 family. MraY subfamily. It depends on Mg(2+) as a cofactor.

It localises to the cell membrane. The enzyme catalyses UDP-N-acetyl-alpha-D-muramoyl-L-alanyl-gamma-D-glutamyl-L-lysyl-D-alanyl-D-alanine + di-trans,octa-cis-undecaprenyl phosphate = Mur2Ac(oyl-L-Ala-gamma-D-Glu-L-Lys-D-Ala-D-Ala)-di-trans,octa-cis-undecaprenyl diphosphate + UMP. It functions in the pathway cell wall biogenesis; peptidoglycan biosynthesis. Functionally, catalyzes the initial step of the lipid cycle reactions in the biosynthesis of the cell wall peptidoglycan: transfers peptidoglycan precursor phospho-MurNAc-pentapeptide from UDP-MurNAc-pentapeptide onto the lipid carrier undecaprenyl phosphate, yielding undecaprenyl-pyrophosphoryl-MurNAc-pentapeptide, known as lipid I. This chain is Phospho-N-acetylmuramoyl-pentapeptide-transferase, found in Lactobacillus acidophilus (strain ATCC 700396 / NCK56 / N2 / NCFM).